The sequence spans 817 residues: Coiled-coil domain-containing protein 175 (817 aa).

Coiled coils occupy residues 130–166 (ILEI…ALGI) and 217–594 (LQDA…KQEE). The tract at residues 761–817 (EEESPSSLSKEDLQKAGMKQKEEKTLRFSPSLHTRRDTLSRNCKMIKKRSRSPKNKP) is disordered. Residues 769 to 786 (SKEDLQKAGMKQKEEKTL) are compositionally biased toward basic and acidic residues. Basic residues predominate over residues 804 to 817 (KMIKKRSRSPKNKP).

The chain is Coiled-coil domain-containing protein 175 (Ccdc175) from Rattus norvegicus (Rat).